We begin with the raw amino-acid sequence, 301 residues long: Ribosomal RNA small subunit methyltransferase H (301 aa).

S-adenosyl-L-methionine contacts are provided by residues 35 to 37, Asp55, Phe84, Asp105, and Gln112; that span reads GGH.

It belongs to the methyltransferase superfamily. RsmH family.

It is found in the cytoplasm. It catalyses the reaction cytidine(1402) in 16S rRNA + S-adenosyl-L-methionine = N(4)-methylcytidine(1402) in 16S rRNA + S-adenosyl-L-homocysteine + H(+). In terms of biological role, specifically methylates the N4 position of cytidine in position 1402 (C1402) of 16S rRNA. The sequence is that of Ribosomal RNA small subunit methyltransferase H from Chloroflexus aggregans (strain MD-66 / DSM 9485).